We begin with the raw amino-acid sequence, 75 residues long: MARDMFKRRRYCRFSAEGIKQVDYKDVDLLKDFINENGKIIPARITGTKAKYQRQLTTAVKRARFLALLPYTDKH.

The protein belongs to the bacterial ribosomal protein bS18 family. Part of the 30S ribosomal subunit. Forms a tight heterodimer with protein bS6.

Functionally, binds as a heterodimer with protein bS6 to the central domain of the 16S rRNA, where it helps stabilize the platform of the 30S subunit. In Methylobacillus flagellatus (strain ATCC 51484 / DSM 6875 / VKM B-1610 / KT), this protein is Small ribosomal subunit protein bS18.